A 175-amino-acid chain; its full sequence is Translation initiation factor IF-3 (175 aa).

It belongs to the IF-3 family. In terms of assembly, monomer.

It is found in the cytoplasm. IF-3 binds to the 30S ribosomal subunit and shifts the equilibrium between 70S ribosomes and their 50S and 30S subunits in favor of the free subunits, thus enhancing the availability of 30S subunits on which protein synthesis initiation begins. This is Translation initiation factor IF-3 from Staphylococcus epidermidis (strain ATCC 35984 / DSM 28319 / BCRC 17069 / CCUG 31568 / BM 3577 / RP62A).